Reading from the N-terminus, the 163-residue chain is Arginine repressor (163 aa).

This sequence belongs to the ArgR family.

It localises to the cytoplasm. It participates in amino-acid biosynthesis; L-arginine biosynthesis [regulation]. In terms of biological role, regulates arginine biosynthesis genes. The protein is Arginine repressor of Anaeromyxobacter dehalogenans (strain 2CP-C).